The sequence spans 206 residues: MLDRHLHPRIKPLLHQCVRVLDKPGITPDGLTLVGFAIGVLALPFLALGWYLAALVVILLNRLLDGLDGALARRRELTDAGGFLDISLDFLFYALVPFGFILAAPEQNALAGGWLLFAFIGTGSSFLAFAALAAKHQIDNPGYAHKSFYYLGGLTEGTETILLFVLGCLFPAWFAWFAWIFGALCWMTTFTRVWSGYLTLKSLQRQ.

Residues 1 to 37 (MLDRHLHPRIKPLLHQCVRVLDKPGITPDGLTLVGFA) lie on the Periplasmic side of the membrane. The chain crosses the membrane as a helical span at residues 38–60 (IGVLALPFLALGWYLAALVVILL). Over 61 to 79 (NRLLDGLDGALARRRELTD) the chain is Cytoplasmic. Residues 80-102 (AGGFLDISLDFLFYALVPFGFIL) traverse the membrane as a helical segment. The Periplasmic segment spans residues 103–111 (AAPEQNALA). A helical transmembrane segment spans residues 112 to 134 (GGWLLFAFIGTGSSFLAFAALAA). The Cytoplasmic segment spans residues 135–146 (KHQIDNPGYAHK). The chain crosses the membrane as a helical span at residues 147 to 169 (SFYYLGGLTEGTETILLFVLGCL). Over 170–173 (FPAW) the chain is Periplasmic. A helical transmembrane segment spans residues 174–196 (FAWFAWIFGALCWMTTFTRVWSG). Residues 197-206 (YLTLKSLQRQ) lie on the Cytoplasmic side of the membrane.

This sequence belongs to the CDP-alcohol phosphatidyltransferase class-I family.

Its subcellular location is the cell inner membrane. This Escherichia coli (strain K12) protein is Inner membrane protein YnjF (ynjF).